Reading from the N-terminus, the 53-residue chain is Large ribosomal subunit protein bL32c (53 aa).

The protein belongs to the bacterial ribosomal protein bL32 family.

It is found in the plastid. The protein resides in the chloroplast. The sequence is that of Large ribosomal subunit protein bL32c from Coffea arabica (Arabian coffee).